The sequence spans 149 residues: Large ribosomal subunit protein uL22c (149 aa).

This sequence belongs to the universal ribosomal protein uL22 family. In terms of assembly, part of the 50S ribosomal subunit.

The protein localises to the plastid. It is found in the chloroplast. This protein binds specifically to 23S rRNA. Functionally, the globular domain of the protein is located near the polypeptide exit tunnel on the outside of the subunit, while an extended beta-hairpin is found that lines the wall of the exit tunnel in the center of the 70S ribosome. This Hordeum vulgare (Barley) protein is Large ribosomal subunit protein uL22c (rpl22).